A 78-amino-acid chain; its full sequence is Large ribosomal subunit protein bL28 (78 aa).

The tract at residues 1 to 23 (MSRVCQVSGKRVQTGNNVSHANN) is disordered. Polar residues predominate over residues 11-22 (RVQTGNNVSHAN).

The protein belongs to the bacterial ribosomal protein bL28 family.

The chain is Large ribosomal subunit protein bL28 from Stenotrophomonas maltophilia (strain R551-3).